Here is a 211-residue protein sequence, read N- to C-terminus: Envelope glycoprotein (211 aa).

The Extracellular portion of the chain corresponds to Gln-1–Leu-151. Residues Val-13–Val-33 form a fusion peptide region. Coiled-coil stretches lie at residues Val-41–Leu-90 and Lys-100–Gly-136. An immunosuppression region spans residues Leu-79–Leu-95. A CX6CC motif is present at residues Cys-96–Cys-104. The helical transmembrane segment at Ile-152–Ile-172 threads the bilayer. Cys-171 is lipidated: S-palmitoyl cysteine; by host. At Leu-173–Glu-211 the chain is on the cytoplasmic side. The YXXL motif; contains endocytosis signal signature appears at Tyr-196–Leu-199.

As to quaternary structure, the mature envelope protein (Env) consists of a trimer of SU-TM heterodimers attached by a labile interchain disulfide bond. Post-translationally, specific enzymatic cleavages in vivo yield mature proteins. Envelope glycoproteins are synthesized as an inactive precursor that is N-glycosylated and processed likely by host cell furin or by a furin-like protease in the Golgi to yield the mature SU and TM proteins. The cleavage site between SU and TM requires the minimal sequence [KR]-X-[KR]-R. The R-peptide is released from the C-terminus of the cytoplasmic tail of the TM protein upon particle formation as a result of proteolytic cleavage by the viral protease. Cleavage of this peptide is required for TM to become fusogenic. The CXXC motif is highly conserved across a broad range of retroviral envelope proteins. It is thought to participate in the formation of a labile disulfide bond possibly with the CX6CC motif present in the transmembrane protein. Isomerization of the intersubunit disulfide bond to an SU intrachain disulfide bond is thought to occur upon receptor recognition in order to allow membrane fusion. In terms of processing, the transmembrane protein is palmitoylated. Post-translationally, the R-peptide is palmitoylated.

The protein resides in the virion membrane. It localises to the host cell membrane. The surface protein (SU) attaches the virus to the host cell by binding to its receptor. This interaction triggers the refolding of the transmembrane protein (TM) and is thought to activate its fusogenic potential by unmasking its fusion peptide. Fusion occurs at the host cell plasma membrane. Its function is as follows. The transmembrane protein (TM) acts as a class I viral fusion protein. Under the current model, the protein has at least 3 conformational states: pre-fusion native state, pre-hairpin intermediate state, and post-fusion hairpin state. During viral and target cell membrane fusion, the coiled coil regions (heptad repeats) assume a trimer-of-hairpins structure, positioning the fusion peptide in close proximity to the C-terminal region of the ectodomain. The formation of this structure appears to drive apposition and subsequent fusion of viral and target cell membranes. Membranes fusion leads to delivery of the nucleocapsid into the cytoplasm. The protein is Envelope glycoprotein (env) of Mus musculus (Mouse).